The chain runs to 91 residues: Small ribosomal subunit protein bS18 (91 aa).

Residues 1-21 are disordered; that stretch reads MSDERAPQRSTGPRKKRPFQR. A compositionally biased stretch (basic residues) spans 12–21; it reads GPRKKRPFQR.

It belongs to the bacterial ribosomal protein bS18 family. As to quaternary structure, part of the 30S ribosomal subunit. Forms a tight heterodimer with protein bS6.

Functionally, binds as a heterodimer with protein bS6 to the central domain of the 16S rRNA, where it helps stabilize the platform of the 30S subunit. The chain is Small ribosomal subunit protein bS18 from Geotalea daltonii (strain DSM 22248 / JCM 15807 / FRC-32) (Geobacter daltonii).